We begin with the raw amino-acid sequence, 462 residues long: Fumarate hydratase class II (462 aa).

Substrate is bound by residues 97 to 99 (SGT), 128 to 131 (HPND), 138 to 140 (STN), and Thr186. His187 serves as the catalytic Proton donor/acceptor. The active site involves Ser317. Residues Ser318 and 323-325 (KVN) contribute to the substrate site.

This sequence belongs to the class-II fumarase/aspartase family. Fumarase subfamily. Homotetramer.

Its subcellular location is the cytoplasm. It catalyses the reaction (S)-malate = fumarate + H2O. The protein operates within carbohydrate metabolism; tricarboxylic acid cycle; (S)-malate from fumarate: step 1/1. Functionally, involved in the TCA cycle. Catalyzes the stereospecific interconversion of fumarate to L-malate. The polypeptide is Fumarate hydratase class II (Neisseria meningitidis serogroup A / serotype 4A (strain DSM 15465 / Z2491)).